The sequence spans 362 residues: Epoxyqueuosine reductase (362 aa).

Asp143 acts as the Proton donor in catalysis. The region spanning Pro191–Met220 is the 4Fe-4S ferredoxin-type domain. [4Fe-4S] cluster is bound by residues Cys200, Cys203, Cys206, Cys210, Cys226, Cys253, Cys256, and Cys260.

It belongs to the QueG family. In terms of assembly, monomer. The cofactor is cob(II)alamin. It depends on [4Fe-4S] cluster as a cofactor.

The protein resides in the cytoplasm. It catalyses the reaction epoxyqueuosine(34) in tRNA + AH2 = queuosine(34) in tRNA + A + H2O. It functions in the pathway tRNA modification; tRNA-queuosine biosynthesis. Its function is as follows. Catalyzes the conversion of epoxyqueuosine (oQ) to queuosine (Q), which is a hypermodified base found in the wobble positions of tRNA(Asp), tRNA(Asn), tRNA(His) and tRNA(Tyr). The polypeptide is Epoxyqueuosine reductase (Francisella cf. novicida (strain Fx1)).